Consider the following 363-residue polypeptide: 3-isopropylmalate dehydrogenase (363 aa).

Position 76-89 (76-89 (GPKWDTLPGHLRPE)) interacts with NAD(+). Arg-96, Arg-106, Arg-134, and Asp-223 together coordinate substrate. Mg(2+) is bound by residues Asp-223, Asp-247, and Asp-251. 281–293 (GSAPDIAGKGVAN) is an NAD(+) binding site.

It belongs to the isocitrate and isopropylmalate dehydrogenases family. LeuB type 1 subfamily. As to quaternary structure, homodimer. Requires Mg(2+) as cofactor. The cofactor is Mn(2+).

The protein localises to the cytoplasm. It carries out the reaction (2R,3S)-3-isopropylmalate + NAD(+) = 4-methyl-2-oxopentanoate + CO2 + NADH. Its pathway is amino-acid biosynthesis; L-leucine biosynthesis; L-leucine from 3-methyl-2-oxobutanoate: step 3/4. In terms of biological role, catalyzes the oxidation of 3-carboxy-2-hydroxy-4-methylpentanoate (3-isopropylmalate) to 3-carboxy-4-methyl-2-oxopentanoate. The product decarboxylates to 4-methyl-2 oxopentanoate. The protein is 3-isopropylmalate dehydrogenase of Halalkalibacterium halodurans (strain ATCC BAA-125 / DSM 18197 / FERM 7344 / JCM 9153 / C-125) (Bacillus halodurans).